Consider the following 512-residue polypeptide: ETS translocation variant 3 (512 aa).

Residues 35–116 constitute a DNA-binding region (ETS); the sequence is IQLWHFILEL…KGKRFTYKFN (82 aa). Positions 138–196 are disordered; that stretch reads QSAPPVPTASSRFHFPPLDTHSPTSDVQPGRFSASSLTASGQESSNGTDRKAELSXLED. Phosphoserine occurs at positions 139, 159, and 315. Residues 158-184 show a composition bias toward polar residues; sequence HSPTSDVQPGRFSASSLTASGQESSNG. The interval 341-512 is disordered; the sequence is QFSIKLQPPP…QGLATAAADA (172 aa). Basic and acidic residues predominate over residues 380–406; that stretch reads IKVEPASEKDAESLRQSAREKEEHTXE. Residue Lys381 forms a Glycyl lysine isopeptide (Lys-Gly) (interchain with G-Cter in SUMO2) linkage. Lys388 bears the N6-acetyllysine; alternate mark. Lys388 participates in a covalent cross-link: Glycyl lysine isopeptide (Lys-Gly) (interchain with G-Cter in SUMO2); alternate. Acidic residues predominate over residues 443–452; it reads EPLEVTEDIE. 2 stretches are compositionally biased toward basic and acidic residues: residues 453–468 and 479–491; these read DRPG…KEDA and RWND…ELSK.

The protein belongs to the ETS family.

The protein localises to the nucleus. In terms of biological role, transcriptional repressor that contribute to growth arrest during terminal macrophage differentiation by repressing target genes involved in Ras-dependent proliferation. Represses MMP1 promoter activity. This chain is ETS translocation variant 3 (ETV3), found in Ateles geoffroyi (Black-handed spider monkey).